A 412-amino-acid polypeptide reads, in one-letter code: Multifunctional CCA protein (412 aa).

2 residues coordinate ATP: glycine 8 and arginine 11. CTP is bound by residues glycine 8 and arginine 11. Glutamate 21 and aspartate 23 together coordinate Mg(2+). Arginine 91, arginine 137, and arginine 140 together coordinate ATP. Positions 91, 137, and 140 each coordinate CTP. In terms of domain architecture, HD spans 228–329 (CGIHTLMSLQ…WRLLQRLDVL (102 aa)).

This sequence belongs to the tRNA nucleotidyltransferase/poly(A) polymerase family. Bacterial CCA-adding enzyme type 1 subfamily. In terms of assembly, monomer. Can also form homodimers and oligomers. It depends on Mg(2+) as a cofactor. Requires Ni(2+) as cofactor.

The enzyme catalyses a tRNA precursor + 2 CTP + ATP = a tRNA with a 3' CCA end + 3 diphosphate. The catalysed reaction is a tRNA with a 3' CCA end + 2 CTP + ATP = a tRNA with a 3' CCACCA end + 3 diphosphate. Functionally, catalyzes the addition and repair of the essential 3'-terminal CCA sequence in tRNAs without using a nucleic acid template. Adds these three nucleotides in the order of C, C, and A to the tRNA nucleotide-73, using CTP and ATP as substrates and producing inorganic pyrophosphate. tRNA 3'-terminal CCA addition is required both for tRNA processing and repair. Also involved in tRNA surveillance by mediating tandem CCA addition to generate a CCACCA at the 3' terminus of unstable tRNAs. While stable tRNAs receive only 3'-terminal CCA, unstable tRNAs are marked with CCACCA and rapidly degraded. This Acinetobacter baumannii (strain AB307-0294) protein is Multifunctional CCA protein.